The primary structure comprises 397 residues: Elongation factor Tu (397 aa).

Residues Lys-10 to Val-207 enclose the tr-type G domain. The interval Gly-19–Thr-26 is G1. Gly-19–Thr-26 contributes to the GTP binding site. Position 26 (Thr-26) interacts with Mg(2+). A G2 region spans residues Gly-63–Asn-67. A G3 region spans residues Asp-84 to Gly-87. GTP contacts are provided by residues Asp-84–His-88 and Asn-139–Asp-142. Positions Asn-139–Asp-142 are G4. Positions Ser-177 to Leu-179 are G5.

Belongs to the TRAFAC class translation factor GTPase superfamily. Classic translation factor GTPase family. EF-Tu/EF-1A subfamily. As to quaternary structure, monomer.

It is found in the cytoplasm. The catalysed reaction is GTP + H2O = GDP + phosphate + H(+). GTP hydrolase that promotes the GTP-dependent binding of aminoacyl-tRNA to the A-site of ribosomes during protein biosynthesis. The chain is Elongation factor Tu from Leifsonia xyli subsp. xyli (strain CTCB07).